We begin with the raw amino-acid sequence, 175 residues long: Alpha-crystallin B chain (175 aa).

An N-acetylmethionine modification is found at M1. S19 is subject to Phosphoserine. S41 carries O-linked (GlcNAc) serine glycosylation. 2 positions are modified to phosphoserine: S45 and S59. The region spanning 56–164 (RAPSWIDTGL…PERTIPITRE (109 aa)) is the sHSP domain. H83 contacts Zn(2+). Residue K90 is glycosylated (N-linked (Glc) (glycation) lysine). K92 bears the N6-acetyllysine; alternate mark. K92 carries an N-linked (Glc) (glycation) lysine; alternate glycan. Zn(2+) contacts are provided by H104, E106, H111, and H119. A disordered region spans residues 144–175 (TVNGPRKQASGPERTIPITREEKPAVTAAPKK). K166 carries the post-translational modification N6-acetyllysine. Residue T170 is glycosylated (O-linked (GlcNAc) threonine).

The protein belongs to the small heat shock protein (HSP20) family. As to quaternary structure, heteromer composed of three CRYAA and one CRYAB subunits. Aggregates with homologous proteins, including the small heat shock protein HSPB1, to form large heteromeric complexes. Inter-subunit bridging via zinc ions enhances stability, which is crucial as there is no protein turn over in the lens. Interacts with HSPBAP1 and TTN/titin. Interacts with TMEM109; in the cellular response to DNA damage. Interacts with DES; binds rapidly during early stages of DES filament assembly and a reduced binding seen in the later stages. Interacts with TMED10; the interaction mediates the translocation from the cytoplasm into the ERGIC (endoplasmic reticulum-Golgi intermediate compartment) and thereby secretion. Interacts with ATP6V1A and with MTOR, forming a ternary complex. Post-translationally, it is not known whether either Lys-90, or Lys-92, or both are glycated. As to expression, lens as well as other tissues.

The protein resides in the cytoplasm. Its subcellular location is the nucleus. It is found in the secreted. The protein localises to the lysosome. Functionally, may contribute to the transparency and refractive index of the lens. Has chaperone-like activity, preventing aggregation of various proteins under a wide range of stress conditions. In lens epithelial cells, stabilizes the ATP6V1A protein, preventing its degradation by the proteasome. The polypeptide is Alpha-crystallin B chain (CRYAB) (Bos taurus (Bovine)).